A 326-amino-acid chain; its full sequence is Aspartate carbamoyltransferase catalytic subunit (326 aa).

Carbamoyl phosphate contacts are provided by R65 and T66. K93 contributes to the L-aspartate binding site. Residues R115, H143, and Q146 each coordinate carbamoyl phosphate. L-aspartate contacts are provided by R176 and R230. Positions 271 and 272 each coordinate carbamoyl phosphate.

Belongs to the aspartate/ornithine carbamoyltransferase superfamily. ATCase family. Heterododecamer (2C3:3R2) of six catalytic PyrB chains organized as two trimers (C3), and six regulatory PyrI chains organized as three dimers (R2).

The enzyme catalyses carbamoyl phosphate + L-aspartate = N-carbamoyl-L-aspartate + phosphate + H(+). It participates in pyrimidine metabolism; UMP biosynthesis via de novo pathway; (S)-dihydroorotate from bicarbonate: step 2/3. Functionally, catalyzes the condensation of carbamoyl phosphate and aspartate to form carbamoyl aspartate and inorganic phosphate, the committed step in the de novo pyrimidine nucleotide biosynthesis pathway. The chain is Aspartate carbamoyltransferase catalytic subunit from Mesorhizobium japonicum (strain LMG 29417 / CECT 9101 / MAFF 303099) (Mesorhizobium loti (strain MAFF 303099)).